The primary structure comprises 146 residues: 3-hydroxyacyl-[acyl-carrier-protein] dehydratase FabZ (146 aa).

The active site involves His49.

Belongs to the thioester dehydratase family. FabZ subfamily.

It localises to the cytoplasm. It catalyses the reaction a (3R)-hydroxyacyl-[ACP] = a (2E)-enoyl-[ACP] + H2O. Involved in unsaturated fatty acids biosynthesis. Catalyzes the dehydration of short chain beta-hydroxyacyl-ACPs and long chain saturated and unsaturated beta-hydroxyacyl-ACPs. The chain is 3-hydroxyacyl-[acyl-carrier-protein] dehydratase FabZ from Pseudomonas savastanoi pv. phaseolicola (strain 1448A / Race 6) (Pseudomonas syringae pv. phaseolicola (strain 1448A / Race 6)).